We begin with the raw amino-acid sequence, 596 residues long: Aspartate--tRNA(Asp/Asn) ligase (596 aa).

E172 is an L-aspartate binding site. Residues 196-199 (QLFK) form an aspartate region. Residue R218 participates in L-aspartate binding. ATP contacts are provided by residues 218-220 (RDE) and Q227. Position 455 (H455) interacts with L-aspartate. E489 lines the ATP pocket. R496 lines the L-aspartate pocket. Residue 541-544 (GLDR) participates in ATP binding.

Belongs to the class-II aminoacyl-tRNA synthetase family. Type 1 subfamily. As to quaternary structure, homodimer.

The protein localises to the cytoplasm. It carries out the reaction tRNA(Asx) + L-aspartate + ATP = L-aspartyl-tRNA(Asx) + AMP + diphosphate. Its function is as follows. Aspartyl-tRNA synthetase with relaxed tRNA specificity since it is able to aspartylate not only its cognate tRNA(Asp) but also tRNA(Asn). Reaction proceeds in two steps: L-aspartate is first activated by ATP to form Asp-AMP and then transferred to the acceptor end of tRNA(Asp/Asn). This is Aspartate--tRNA(Asp/Asn) ligase from Bordetella avium (strain 197N).